The sequence spans 491 residues: UDP-N-acetylmuramate--L-alanine ligase (491 aa).

126-132 lines the ATP pocket; that stretch reads GTHGKTT.

The protein belongs to the MurCDEF family.

The protein localises to the cytoplasm. It carries out the reaction UDP-N-acetyl-alpha-D-muramate + L-alanine + ATP = UDP-N-acetyl-alpha-D-muramoyl-L-alanine + ADP + phosphate + H(+). It functions in the pathway cell wall biogenesis; peptidoglycan biosynthesis. Cell wall formation. This Escherichia coli O7:K1 (strain IAI39 / ExPEC) protein is UDP-N-acetylmuramate--L-alanine ligase.